We begin with the raw amino-acid sequence, 659 residues long: Polyamine transporter 4 (659 aa).

2 stretches are compositionally biased toward polar residues: residues Met-1–Gln-20 and Asn-28–Ile-45. The disordered stretch occupies residues Met-1–Asp-81. At Met-1 to Ala-99 the chain is on the cytoplasmic side. The helical transmembrane segment at Phe-100–Val-120 threads the bilayer. Residues Glu-121 to Thr-128 lie on the Extracellular side of the membrane. Residues Leu-129–Leu-149 traverse the membrane as a helical segment. At Ser-150–Pro-157 the chain is on the cytoplasmic side. The helical transmembrane segment at Val-158–Gly-178 threads the bilayer. Residues His-179–Arg-187 are Extracellular-facing. The helical transmembrane segment at Phe-188–Ile-208 threads the bilayer. Topologically, residues Phe-209–Ser-215 are cytoplasmic. Residues Val-216–Ala-236 traverse the membrane as a helical segment. Topologically, residues Gly-237 to Arg-246 are extracellular. A helical membrane pass occupies residues Trp-247–Pro-267. The Cytoplasmic segment spans residues Glu-268–Glu-316. A helical transmembrane segment spans residues Pro-317 to Phe-337. Over Glu-338–Ser-355 the chain is Extracellular. A helical membrane pass occupies residues Gly-356–Ile-376. Topologically, residues Asp-377 to Lys-423 are cytoplasmic. The interval Ala-387–Ala-408 is disordered. A helical membrane pass occupies residues Phe-424–Trp-444. At Thr-445 to Val-456 the chain is on the extracellular side. The helical transmembrane segment at Ala-457 to Phe-477 threads the bilayer. Topologically, residues Ser-478 to Val-486 are cytoplasmic. Residues Ala-487–Ile-509 traverse the membrane as a helical segment. The Extracellular portion of the chain corresponds to Gln-510–Lys-518. A helical membrane pass occupies residues Trp-519–Glu-539. Topologically, residues Lys-540–Val-659 are cytoplasmic. The span at Met-587–Ser-602 shows a compositional bias: basic and acidic residues. Residues Met-587–Ser-631 form a disordered region. 3 positions are modified to phosphothreonine: Thr-589, Thr-606, and Thr-608. Over residues His-622–Ser-631 the composition is skewed to polar residues. A phosphoserine mark is found at Ser-633 and Ser-646.

The protein belongs to the major facilitator superfamily. DHA1 family. Polyamines/proton antiporter (TC 2.A.1.2.16) subfamily.

It localises to the cell membrane. Functionally, cell membrane polyamine/proton antiporter, involved in the detoxification of excess polyamines in the cytoplasm. Recognizes spermidine, spermine and the antimalarial drug quinidine, but not quinine, chloroquine and mefloquine. The polypeptide is Polyamine transporter 4 (TPO4) (Saccharomyces cerevisiae (strain ATCC 204508 / S288c) (Baker's yeast)).